The primary structure comprises 199 residues: Prolactin (199 aa).

Cys4 and Cys11 are oxidised to a cystine. Phosphoserine occurs at positions 26, 34, and 90. 2 cysteine pairs are disulfide-bonded: Cys58-Cys174 and Cys191-Cys199.

It belongs to the somatotropin/prolactin family. As to quaternary structure, interacts with PRLR.

The protein resides in the secreted. Its function is as follows. Prolactin acts primarily on the mammary gland by promoting lactation. This chain is Prolactin (PRL), found in Loxodonta africana (African elephant).